Consider the following 101-residue polypeptide: Urinary protein 2 (101 aa).

The signal sequence occupies residues 1-21 (MGKHILLLPLGLSLLMSSLLA). The 78-residue stretch at 22–99 (LQCFRCTSFD…CSATPFCNMV (78 aa)) folds into the UPAR/Ly6 domain. Cystine bridges form between Cys24-Cys51, Cys27-Cys36, Cys43-Cys70, Cys73-Cys89, and Cys90-Cys96. Asn67 and Asn74 each carry an N-linked (GlcNAc...) asparagine glycan.

Post-translationally, N-glycosylated.

It localises to the secreted. This Rattus norvegicus (Rat) protein is Urinary protein 2.